Consider the following 223-residue polypeptide: Ribose-5-phosphate isomerase A (223 aa).

Substrate-binding positions include 32-35 (TGST), 83-86 (DGAD), and 96-99 (KGGG). Catalysis depends on Glu105, which acts as the Proton acceptor. Residue Lys123 coordinates substrate.

Belongs to the ribose 5-phosphate isomerase family. In terms of assembly, homodimer.

The enzyme catalyses aldehydo-D-ribose 5-phosphate = D-ribulose 5-phosphate. Its pathway is carbohydrate degradation; pentose phosphate pathway; D-ribose 5-phosphate from D-ribulose 5-phosphate (non-oxidative stage): step 1/1. Its function is as follows. Catalyzes the reversible conversion of ribose-5-phosphate to ribulose 5-phosphate. This chain is Ribose-5-phosphate isomerase A, found in Acinetobacter baumannii (strain AYE).